The chain runs to 143 residues: Nucleoside diphosphate kinase (143 aa).

K11, F59, R87, T93, R104, and N114 together coordinate ATP. H117 serves as the catalytic Pros-phosphohistidine intermediate.

The protein belongs to the NDK family. Homotetramer. Mg(2+) is required as a cofactor.

The protein resides in the cytoplasm. It carries out the reaction a 2'-deoxyribonucleoside 5'-diphosphate + ATP = a 2'-deoxyribonucleoside 5'-triphosphate + ADP. The enzyme catalyses a ribonucleoside 5'-diphosphate + ATP = a ribonucleoside 5'-triphosphate + ADP. Major role in the synthesis of nucleoside triphosphates other than ATP. The ATP gamma phosphate is transferred to the NDP beta phosphate via a ping-pong mechanism, using a phosphorylated active-site intermediate. The polypeptide is Nucleoside diphosphate kinase (Thioalkalivibrio sulfidiphilus (strain HL-EbGR7)).